The sequence spans 394 residues: Gap junction gamma-1 protein (394 aa).

Topologically, residues 1–22 (MSWSFLTRLLEEIHNHSTFVGK) are cytoplasmic. The helical transmembrane segment at 23–45 (IWLSVLIVFRIVLTAVGGESIYY) threads the bilayer. Topologically, residues 46–75 (DEQSKFVCNTEQPGCENVCYDAFAPLSHVR) are extracellular. A helical transmembrane segment spans residues 76-95 (FWVFQIILVATPSVMYLGYA). Topologically, residues 96–176 (IHKIARMVEH…RRIREDGLMR (81 aa)) are cytoplasmic. A helical membrane pass occupies residues 177-199 (IYVLQLLVRATFEVGFLIGQYLL). At 200–229 (YGFEVSPVFVCSRKPCPHKIDCFISRPTEK) the chain is on the extracellular side. Residues 230–252 (TIFLLIMYGVSCMCLLLNVWEML) form a helical membrane-spanning segment. The Cytoplasmic segment spans residues 253–394 (HLGFGTIRDT…SGDGKNSVWI (142 aa)). Positions 354-394 (IQAYNNQNNPGSSSREKKSKAGSNKSSASSKSGDGKNSVWI) are disordered. Residues 356–366 (AYNNQNNPGSS) are compositionally biased toward polar residues. Residues 374-394 (AGSNKSSASSKSGDGKNSVWI) are compositionally biased toward low complexity.

This sequence belongs to the connexin family. Gamma-type subfamily. As to quaternary structure, a connexon is composed of a hexamer of connexins. In terms of tissue distribution, mostly in heart and stomach.

The protein resides in the cell membrane. It is found in the cell junction. The protein localises to the gap junction. One gap junction consists of a cluster of closely packed pairs of transmembrane channels, the connexons, through which materials of low MW diffuse from one cell to a neighboring cell. The sequence is that of Gap junction gamma-1 protein (GJC1) from Gallus gallus (Chicken).